Here is a 352-residue protein sequence, read N- to C-terminus: 7,8-didemethyl-8-hydroxy-5-deazariboflavin synthase (352 aa).

The Radical SAM core domain maps to 35-275 (ITFSKNAFIP…EDISIQVPPN (241 aa)). The [4Fe-4S] cluster site is built by cysteine 49, cysteine 53, and cysteine 56.

It belongs to the radical SAM superfamily. CofG family. Consists of two subunits, CofG and CofH. It depends on [4Fe-4S] cluster as a cofactor.

The catalysed reaction is 5-amino-5-(4-hydroxybenzyl)-6-(D-ribitylimino)-5,6-dihydrouracil + S-adenosyl-L-methionine = 7,8-didemethyl-8-hydroxy-5-deazariboflavin + 5'-deoxyadenosine + L-methionine + NH4(+) + H(+). Its pathway is cofactor biosynthesis; coenzyme F0 biosynthesis. Functionally, catalyzes the radical-mediated synthesis of 7,8-didemethyl-8-hydroxy-5-deazariboflavin from 5-amino-5-(4-hydroxybenzyl)-6-(D-ribitylimino)-5,6-dihydrouracil. The chain is 7,8-didemethyl-8-hydroxy-5-deazariboflavin synthase from Methanococcus maripaludis (strain C6 / ATCC BAA-1332).